Consider the following 495-residue polypeptide: Glucose-6-phosphate 1-dehydrogenase (495 aa).

At serine 1 the chain carries N-acetylserine. NADP(+) contacts are provided by residues 15-22, arginine 49, and lysine 149; that span reads GASGDLAR. Residues lysine 149, 179 to 183, glutamate 217, and aspartate 236 contribute to the D-glucose 6-phosphate site; that span reads HYLGK. Histidine 241 serves as the catalytic Proton acceptor. Arginine 332 is an NADP(+) binding site. A D-glucose 6-phosphate-binding site is contributed by lysine 335. 3 residues coordinate NADP(+): lysine 341, arginine 345, and arginine 367. Glutamine 369 serves as a coordination point for D-glucose 6-phosphate. NADP(+) is bound by residues 375 to 377, 395 to 397, and lysine 463; these read YLK and DLT.

Belongs to the glucose-6-phosphate dehydrogenase family.

The catalysed reaction is D-glucose 6-phosphate + NADP(+) = 6-phospho-D-glucono-1,5-lactone + NADPH + H(+). The protein operates within carbohydrate degradation; pentose phosphate pathway; D-ribulose 5-phosphate from D-glucose 6-phosphate (oxidative stage): step 1/3. Functionally, catalyzes the rate-limiting step of the oxidative pentose-phosphate pathway, which represents a route for the dissimilation of carbohydrates besides glycolysis. The main function of this enzyme is to provide reducing power (NADPH) and pentose phosphates for fatty acid and nucleic acid synthesis. This chain is Glucose-6-phosphate 1-dehydrogenase, found in Cyberlindnera jadinii (Torula yeast).